A 336-amino-acid chain; its full sequence is MKLSELLSTYSIETEFSNDFEVHALAELDKATPNDISYIDQARYLKLLKDSKAGAVFIRKKESSKVPKRMQALIVDNPHLAFAKASHAFKIPFFKNPESVSEPKHFKKVTIMPNVMIGEGVEIGENSLIYPGVVIADGVKIGKNCVLYPRVILYQNTILEDNVTIHAGSVIGGDGFGYAHTALGEHVKIEHVGIVRIQKNVEIGANTAIDRAVFGETLIKEGVKIDNLVQIGHNCVLGEHSIVVSQVGLSGSTTTGRNVVFGGQVGIGGHLHVGEFTQIGGKSAVGKDLPPNTNFAGAIPAMEIHEWHHFLAHLRTNFRKQQKTSLLQKAKGFFKS.

The active-site Proton acceptor is the H233.

The protein belongs to the transferase hexapeptide repeat family. LpxD subfamily. Homotrimer.

The catalysed reaction is a UDP-3-O-[(3R)-3-hydroxyacyl]-alpha-D-glucosamine + a (3R)-hydroxyacyl-[ACP] = a UDP-2-N,3-O-bis[(3R)-3-hydroxyacyl]-alpha-D-glucosamine + holo-[ACP] + H(+). The protein operates within bacterial outer membrane biogenesis; LPS lipid A biosynthesis. In terms of biological role, catalyzes the N-acylation of UDP-3-O-acylglucosamine using 3-hydroxyacyl-ACP as the acyl donor. Is involved in the biosynthesis of lipid A, a phosphorylated glycolipid that anchors the lipopolysaccharide to the outer membrane of the cell. In Helicobacter pylori (strain HPAG1), this protein is UDP-3-O-acylglucosamine N-acyltransferase.